Here is a 560-residue protein sequence, read N- to C-terminus: Calcium-binding and coiled-coil domain-containing protein 1-A (560 aa).

2 coiled-coil regions span residues 156 to 192 (KATF…EKRI) and 367 to 480 (WWQE…DKML). The interval 480–517 (LMEDKTDSSPPTLSVDLSDSDDESPGDEGVSQQLGPCS) is disordered. Positions 487 to 496 (SSPPTLSVDL) are enriched in low complexity.

Belongs to the CALCOCO family.

Its subcellular location is the cytoplasm. The protein localises to the nucleus. Its function is as follows. May function as a coactivator for aryl hydrocarbon and nuclear receptors. This chain is Calcium-binding and coiled-coil domain-containing protein 1-A (calcoco1-a), found in Xenopus laevis (African clawed frog).